The chain runs to 105 residues: Large ribosomal subunit protein uL24 (105 aa).

Basic and acidic residues predominate over residues 77-93; sequence DGKPTRVGYRKDDETGK. A disordered region spans residues 77 to 105; that stretch reads DGKPTRVGYRKDDETGKNVRIAKSNGKDL.

It belongs to the universal ribosomal protein uL24 family. As to quaternary structure, part of the 50S ribosomal subunit.

In terms of biological role, one of two assembly initiator proteins, it binds directly to the 5'-end of the 23S rRNA, where it nucleates assembly of the 50S subunit. Functionally, one of the proteins that surrounds the polypeptide exit tunnel on the outside of the subunit. The chain is Large ribosomal subunit protein uL24 from Mycolicibacterium gilvum (strain PYR-GCK) (Mycobacterium gilvum (strain PYR-GCK)).